Consider the following 337-residue polypeptide: MRFKGLDLNLLVVLDSLMTARNLTAAARSINLSQPAMSAAVARLRAYFGDELFTMRGRTLVPTPRAESLASPVRKALLDIQLSIIARDKFNPAESCRRFRISLSDCVTLIFFRQIVDRVARDAPAVSFELLPLREDHDELLRRGEIDFLIMPEPFMSSAHPRAALFGERLVCAGCRTNKRLPHRLTFEEYMSLGQVAVRWNLAHNPSIEEQFLLQHGLKRRIDIVVQSFCMIPPMLSGTDRIGVMPLRLVKHFEKVTPLRIVDLPLSLPAFTEAVQWPAFHNADPASIWMREILLQESSRMGSWGEERQTVKSLLSSNLRSDPLCIKASQLAEPRSS.

Residues 6-63 (LDLNLLVVLDSLMTARNLTAAARSINLSQPAMSAAVARLRAYFGDELFTMRGRTLVPT) form the HTH lysR-type domain. Positions 23-42 (LTAAARSINLSQPAMSAAVA) form a DNA-binding region, H-T-H motif.

The protein belongs to the LysR transcriptional regulatory family.

Its function is as follows. NodD regulates the expression of the nodABCFE genes which encode other nodulation proteins. NodD is also a negative regulator of its own expression. Binds flavonoids as inducers. The protein is Nodulation protein D 2 (nodD2) of Bradyrhizobium sp. (strain NC92).